The sequence spans 197 residues: ATP-dependent Clp protease proteolytic subunit 2 (197 aa).

Ser97 (nucleophile) is an active-site residue. Residue His122 is part of the active site.

This sequence belongs to the peptidase S14 family. Fourteen ClpP subunits assemble into 2 heptameric rings which stack back to back to give a disk-like structure with a central cavity, resembling the structure of eukaryotic proteasomes.

Its subcellular location is the cytoplasm. It catalyses the reaction Hydrolysis of proteins to small peptides in the presence of ATP and magnesium. alpha-casein is the usual test substrate. In the absence of ATP, only oligopeptides shorter than five residues are hydrolyzed (such as succinyl-Leu-Tyr-|-NHMec, and Leu-Tyr-Leu-|-Tyr-Trp, in which cleavage of the -Tyr-|-Leu- and -Tyr-|-Trp bonds also occurs).. In terms of biological role, cleaves peptides in various proteins in a process that requires ATP hydrolysis. Has a chymotrypsin-like activity. Plays a major role in the degradation of misfolded proteins. The protein is ATP-dependent Clp protease proteolytic subunit 2 of Leptospira interrogans serogroup Icterohaemorrhagiae serovar copenhageni (strain Fiocruz L1-130).